The following is a 305-amino-acid chain: Acetylglutamate kinase (305 aa).

Substrate-binding positions include 67–68 (GG), Arg89, and Asn190.

It belongs to the acetylglutamate kinase family. ArgB subfamily.

Its subcellular location is the cytoplasm. The enzyme catalyses N-acetyl-L-glutamate + ATP = N-acetyl-L-glutamyl 5-phosphate + ADP. It functions in the pathway amino-acid biosynthesis; L-arginine biosynthesis; N(2)-acetyl-L-ornithine from L-glutamate: step 2/4. In terms of biological role, catalyzes the ATP-dependent phosphorylation of N-acetyl-L-glutamate. In Bifidobacterium longum subsp. infantis (strain ATCC 15697 / DSM 20088 / JCM 1222 / NCTC 11817 / S12), this protein is Acetylglutamate kinase.